Reading from the N-terminus, the 416-residue chain is CinA-like protein (416 aa).

The protein belongs to the CinA family.

The polypeptide is CinA-like protein (Amoebophilus asiaticus (strain 5a2)).